The following is an 81-amino-acid chain: Short neurotoxin 2 (81 aa).

A signal peptide spans 1-21 (MKTLLLTLVVVTIVCLDLGYT). 4 disulfide bridges follow: cysteine 24–cysteine 43, cysteine 38–cysteine 60, cysteine 62–cysteine 73, and cysteine 74–cysteine 79.

It belongs to the three-finger toxin family. Short-chain subfamily. Type I alpha-neurotoxin sub-subfamily. Expressed by the venom gland.

It is found in the secreted. In terms of biological role, binds to muscle nicotinic acetylcholine receptor (nAChR) and inhibit acetylcholine from binding to the receptor, thereby impairing neuromuscular transmission. The chain is Short neurotoxin 2 from Tropidechis carinatus (Australian rough-scaled snake).